A 463-amino-acid polypeptide reads, in one-letter code: Phosphoglucosamine mutase (463 aa).

Ser110 functions as the Phosphoserine intermediate in the catalytic mechanism. Residues Ser110, Asp255, Asp257, and Asp259 each coordinate Mg(2+). Ser110 carries the phosphoserine modification.

This sequence belongs to the phosphohexose mutase family. Mg(2+) is required as a cofactor. Activated by phosphorylation.

The enzyme catalyses alpha-D-glucosamine 1-phosphate = D-glucosamine 6-phosphate. In terms of biological role, catalyzes the conversion of glucosamine-6-phosphate to glucosamine-1-phosphate. This is Phosphoglucosamine mutase from Koribacter versatilis (strain Ellin345).